Reading from the N-terminus, the 387-residue chain is Probable aminomethyltransferase, mitochondrial (387 aa).

The substrate site is built by Glu219, Arg248, and Tyr385.

This sequence belongs to the GcvT family. The glycine cleavage system is composed of four proteins: P, T, L and H.

The protein resides in the mitochondrion. It carries out the reaction N(6)-[(R)-S(8)-aminomethyldihydrolipoyl]-L-lysyl-[protein] + (6S)-5,6,7,8-tetrahydrofolate = N(6)-[(R)-dihydrolipoyl]-L-lysyl-[protein] + (6R)-5,10-methylene-5,6,7,8-tetrahydrofolate + NH4(+). Functionally, the glycine cleavage system catalyzes the degradation of glycine. This is Probable aminomethyltransferase, mitochondrial (gcv1) from Schizosaccharomyces pombe (strain 972 / ATCC 24843) (Fission yeast).